The chain runs to 443 residues: F-box/LRR-repeat protein At2g42720 (443 aa).

In terms of domain architecture, F-box spans 1-47; the sequence is MDRISSLPDEILEHILSFLSTKEAALTSSLSTRWKNVFVFVPSLHLD. LRR repeat units follow at residues 139 to 167, 169 to 194, 201 to 236, 271 to 296, 323 to 348, and 363 to 389; these read KLRL…CLDT, DFDG…VLED, CGSV…ELSC, SSHL…HLTS, DKKQ…VFKG, and CSGI…SYQG.

This chain is F-box/LRR-repeat protein At2g42720, found in Arabidopsis thaliana (Mouse-ear cress).